The following is a 609-amino-acid chain: Protein kinase PVPK-1 (609 aa).

The span at 1-19 shows a compositional bias: polar residues; the sequence is MESSVNGVDSLSEVQNSVS. Disordered stretches follow at residues 1–51 and 80–100; these read MESS…GHQT and PTKL…EPNG. Residues 229 to 565 enclose the Protein kinase domain; it reads FRLLKKLGCG…ATEIKQHPFF (337 aa). ATP-binding positions include 235 to 243 and lysine 258; that span reads LGCGDIGSV. Residue aspartate 354 is the Proton acceptor of the active site. Positions 429–448 are disordered; that stretch reads GKSKKDKKSKPKNDMHNQVT.

It belongs to the protein kinase superfamily. Ser/Thr protein kinase family.

It carries out the reaction L-seryl-[protein] + ATP = O-phospho-L-seryl-[protein] + ADP + H(+). The enzyme catalyses L-threonyl-[protein] + ATP = O-phospho-L-threonyl-[protein] + ADP + H(+). In Phaseolus vulgaris (Kidney bean), this protein is Protein kinase PVPK-1.